Consider the following 349-residue polypeptide: Zinc-type alcohol dehydrogenase-like protein PB24D3.08c (349 aa).

The protein belongs to the zinc-containing alcohol dehydrogenase family. Quinone oxidoreductase subfamily.

The protein resides in the cytoplasm. The protein localises to the nucleus. The sequence is that of Zinc-type alcohol dehydrogenase-like protein PB24D3.08c from Schizosaccharomyces pombe (strain 972 / ATCC 24843) (Fission yeast).